The chain runs to 441 residues: MQPLPSLCGRALVALILACGVAGIQAEEREFPPAGATQPLPGTGEMMETPTETSWPGRSNASDPRSSATPQIPRGGRMAGIPPRTPPPCDGPIEIKETFKYINTVVSCLVFVLGIIGNSTLLRIIYKNKCMRNGPNILIASLALGDLLHIIIDIPINTYKLLAKDWPFGVEMCKLVPFIQKASVGITVLSLCALSIDRYRAVASWSRIKGIGVPKWTAVEIVLIWVVSVVLAVPEAVGFDIITSDHIGNKLRICLLHPTQKTAFMQFYKTAKDWWLFSFYFCLPLAITALFYTLMTCEMLRKKSGMQIALNDHLKQRREVAKTVFCLVLVFALCWLPLHLSRILKLTLYDQHDPRRCEFLSFLLVLDYIGINMASLNSCINPIALYLVSKRFKNCFKSCLCCWCQSFEEKQSLEEKQSCLKFKANDHGYDNFRSSNKYSSS.

The signal sequence occupies residues 1–26; that stretch reads MQPLPSLCGRALVALILACGVAGIQA. Over 27–100 the chain is Extracellular; that stretch reads EEREFPPAGA…GPIEIKETFK (74 aa). The tract at residues 30–87 is disordered; that stretch reads EFPPAGATQPLPGTGEMMETPTETSWPGRSNASDPRSSATPQIPRGGRMAGIPPRTPP. Residues 41-53 show a composition bias toward low complexity; sequence PGTGEMMETPTET. A compositionally biased stretch (polar residues) spans 54–70; it reads SWPGRSNASDPRSSATP. The helical transmembrane segment at 101–125 threads the bilayer; that stretch reads YINTVVSCLVFVLGIIGNSTLLRII. Topologically, residues 126 to 136 are cytoplasmic; it reads YKNKCMRNGPN. Residues 137-162 form a helical membrane-spanning segment; the sequence is ILIASLALGDLLHIIIDIPINTYKLL. The Extracellular portion of the chain corresponds to 163–174; sequence AKDWPFGVEMCK. A disulfide bond links Cys-173 and Cys-254. Residues 175–196 form a helical membrane-spanning segment; it reads LVPFIQKASVGITVLSLCALSI. Topologically, residues 197–217 are cytoplasmic; it reads DRYRAVASWSRIKGIGVPKWT. A helical membrane pass occupies residues 218–242; it reads AVEIVLIWVVSVVLAVPEAVGFDII. At 243–270 the chain is on the extracellular side; it reads TSDHIGNKLRICLLHPTQKTAFMQFYKT. Residues 271-295 form a helical membrane-spanning segment; the sequence is AKDWWLFSFYFCLPLAITALFYTLM. Residues 296 to 323 are Cytoplasmic-facing; it reads TCEMLRKKSGMQIALNDHLKQRREVAKT. Ser-304 is subject to Phosphoserine. The helical transmembrane segment at 324-349 threads the bilayer; that stretch reads VFCLVLVFALCWLPLHLSRILKLTLY. Residues 350–361 are Extracellular-facing; sequence DQHDPRRCEFLS. The chain crosses the membrane as a helical span at residues 362–388; it reads FLLVLDYIGINMASLNSCINPIALYLV. Over 389 to 441 the chain is Cytoplasmic; it reads SKRFKNCFKSCLCCWCQSFEEKQSLEEKQSCLKFKANDHGYDNFRSSNKYSSS. 2 S-palmitoyl cysteine lipidation sites follow: Cys-402 and Cys-404. A phosphoserine mark is found at Ser-418, Ser-434, and Ser-435. Tyr-438 is modified (phosphotyrosine). Residues Ser-439, Ser-440, and Ser-441 each carry the phosphoserine modification.

It belongs to the G-protein coupled receptor 1 family. Endothelin receptor subfamily. EDNRB sub-subfamily. In terms of processing, it is not sure whether phosphorylation is on Ser-434 or Ser-435.

Its subcellular location is the cell membrane. Its function is as follows. Non-specific receptor for endothelin 1, 2, and 3. Mediates its action by association with G proteins that activate a phosphatidylinositol-calcium second messenger system. This is Endothelin receptor type B (EDNRB) from Bos taurus (Bovine).